The primary structure comprises 299 residues: Sulfate adenylyltransferase subunit 2 (299 aa).

Belongs to the PAPS reductase family. CysD subfamily. Sulfate-activating enzymes, NodP and NodQ, may be physically associated.

It catalyses the reaction sulfate + ATP + H(+) = adenosine 5'-phosphosulfate + diphosphate. Functionally, proposed to provide activated sulfate for transfer to nod factor. The sequence is that of Sulfate adenylyltransferase subunit 2 (nodP) from Rhizobium sp. (strain BR816).